The chain runs to 511 residues: MEITTIIFLIISSLTFSIFLKLIFFFSTHKLPPGPPRFPVIGNIIWLKKNNFSDFQGVLRDLASRHGPIITLHVGSKPSIWVTDRSLAHQALVQNGAVFSDRSLALPTTKVITSNQHDIHSSVYGSLWRTLRRNLTSEILQPSRVKAHAPSRKWSLEILVDLFETEQREKGHISDALDHLRHAMFYLLALMCFGEKLRKEEIREIEEAQYQMLISYTKFSVLNIFPSVTKFLLRRKWKEFLELRKSQESVILRYVNARSKETTGDVLCYVDTLLNLEIPTEEKEGGKKRKLSDSEIVSLCSEFLNAATDPTATSMQWIMAIMVKYPEIQRKVYEEMKTVFAGEEEEREEIREEDLGKLSYLKAVILECLRRHPPGHYLSYHKVTHDTVLGGFLIPRQGTINFMVGEMGRDPKIWEDPLTFKPERFLENGEACDFDMTGTREIKMMPFGAGRRMCPGYALSLLHLEYYVANLVWKFEWKCVEGEEVDLSEKQQFITMVMKNPFKANIYPRRK.

Residues 6–26 (IIFLIISSLTFSIFLKLIFFF) form a helical; Signal-anchor for type II membrane protein membrane-spanning segment. Residue C454 coordinates heme.

This sequence belongs to the cytochrome P450 family. Heme serves as cofactor.

It localises to the endoplasmic reticulum membrane. It catalyses the reaction primary fluorescent chlorophyll catabolite + reduced [NADPH--hemoprotein reductase] + O2 = primary fluorescent dioxobilin-type chlorophyll catabolite + formate + oxidized [NADPH--hemoprotein reductase] + 2 H(+). It functions in the pathway porphyrin-containing compound metabolism; chlorophyll degradation. Its function is as follows. Involved in the chlorophyll breakdown by its action in nonpolar primary fluorescent chlorophyll catabolite (pFCC) decarbonylation. Involved in the formation of major chlorophyll breakdown products, including non-fluorescent dioxobilin-type chlorophyll catabolites (NDCCs), during leaf senescence. The protein is Cytochrome P450 89A9 of Arabidopsis thaliana (Mouse-ear cress).